We begin with the raw amino-acid sequence, 203 residues long: Urease accessory protein UreG (203 aa).

14-21 (GPVGSGKT) contacts GTP.

Belongs to the SIMIBI class G3E GTPase family. UreG subfamily. As to quaternary structure, homodimer. UreD, UreF and UreG form a complex that acts as a GTP-hydrolysis-dependent molecular chaperone, activating the urease apoprotein by helping to assemble the nickel containing metallocenter of UreC. The UreE protein probably delivers the nickel.

It localises to the cytoplasm. In terms of biological role, facilitates the functional incorporation of the urease nickel metallocenter. This process requires GTP hydrolysis, probably effectuated by UreG. The protein is Urease accessory protein UreG of Agrobacterium fabrum (strain C58 / ATCC 33970) (Agrobacterium tumefaciens (strain C58)).